Consider the following 105-residue polypeptide: Small ribosomal subunit protein eS26 (105 aa).

Belongs to the eukaryotic ribosomal protein eS26 family. As to quaternary structure, component of the small ribosomal subunit.

It is found in the cytoplasm. In Encephalitozoon cuniculi (strain GB-M1) (Microsporidian parasite), this protein is Small ribosomal subunit protein eS26 (RPS26).